The primary structure comprises 26 residues: Stage V sporulation protein M (26 aa).

The interval 3-9 (FYTIKLP) is important for localization.

Interacts with SpoIVA. May interact with the ATP-dependent protease FtsH.

The protein localises to the forespore outer membrane. Its function is as follows. Coordinates cortex and coat assembly during sporulation. Associates with the spore coat protein SpoIVA and with the outer forespore membrane, thereby serving as a membrane anchor that tethers SpoIVA and the entire spore coat to the forespore surface. May also serve as a competitive inhibitor of FtsH activity during sporulation. This Bacillus subtilis (strain 168) protein is Stage V sporulation protein M.